Consider the following 120-residue polypeptide: Acylphosphatase-1 (120 aa).

Alanine 2 is modified (N-acetylalanine). The region spanning 8-98 is the Acylphosphatase-like domain; the sequence is SCEFEVFGRV…YGYANFHIKP (91 aa). Catalysis depends on residues arginine 23 and asparagine 41. The interval 91–120 is disordered; that stretch reads YANFHIKPDPHENRPVHEGLGSSSSHHDSN. Positions 96 to 107 are enriched in basic and acidic residues; the sequence is IKPDPHENRPVH.

It belongs to the acylphosphatase family.

It localises to the cytoplasm. It catalyses the reaction an acyl phosphate + H2O = a carboxylate + phosphate + H(+). The chain is Acylphosphatase-1 (Acyp) from Drosophila melanogaster (Fruit fly).